Reading from the N-terminus, the 163-residue chain is Nucleotide-binding protein YajQ (163 aa).

It belongs to the YajQ family.

Functionally, nucleotide-binding protein. This chain is Nucleotide-binding protein YajQ, found in Salmonella heidelberg (strain SL476).